The primary structure comprises 351 residues: METNLDGCFERVEKTLGSMIDSLAKNNPSQKLAEELLAAEAELSKSLKLLETHQNNNARLQQLRQETSLHDTQLKDIMSSLWNMRRELKAVPTTSNPPPGPKHQFTTSELLAYARRISRNTLPLPGVTNGVDMTPTQFSASLTEPEDSFRLQFQPTQTQTPTNSFNLSFNGTVSTPIGLSAPTPTTTNDTQPSTQLPPSQQPPPKTAPADDKLPAHLKPAVNPLHDAAFHPWPTEGQIRTGALAALQRLVDAGIEPRGYDPAEQERRRVAEEKARREAEERARLEREEAERKGREERERMAREREAARLRNAGGADGDGERRESVAVARPKPKQFTFLGADDDEDDEDEDD.

The stretch at 30–68 forms a coiled coil; the sequence is QKLAEELLAAEAELSKSLKLLETHQNNNARLQQLRQETS. Disordered stretches follow at residues 156 to 217 and 256 to 351; these read TQTQ…PAHL and PRGY…DEDD. Positions 163–177 are enriched in polar residues; it reads NSFNLSFNGTVSTPI. Positions 182-198 are enriched in low complexity; sequence PTPTTTNDTQPSTQLPP. Over residues 257 to 308 the composition is skewed to basic and acidic residues; that stretch reads RGYDPAEQERRRVAEEKARREAEERARLEREEAERKGREERERMAREREAAR. Residues 262–311 are a coiled coil; it reads AEQERRRVAEEKARREAEERARLEREEAERKGREERERMAREREAARLRN. Positions 340–351 are enriched in acidic residues; that stretch reads ADDDEDDEDEDD.

It belongs to the Mediator complex subunit 4 family. In terms of assembly, component of the Mediator complex.

It localises to the nucleus. Functionally, component of the Mediator complex, a coactivator involved in the regulated transcription of nearly all RNA polymerase II-dependent genes. Mediator functions as a bridge to convey information from gene-specific regulatory proteins to the basal RNA polymerase II transcription machinery. Mediator is recruited to promoters by direct interactions with regulatory proteins and serves as a scaffold for the assembly of a functional preinitiation complex with RNA polymerase II and the general transcription factors. The chain is Mediator of RNA polymerase II transcription subunit 4 (MED4) from Chaetomium globosum (strain ATCC 6205 / CBS 148.51 / DSM 1962 / NBRC 6347 / NRRL 1970) (Soil fungus).